Consider the following 511-residue polypeptide: Histidine ammonia-lyase (511 aa).

Positions 142-144 (ASG) form a cross-link, 5-imidazolinone (Ala-Gly). 2,3-didehydroalanine (Ser) is present on S143.

It belongs to the PAL/histidase family. Contains an active site 4-methylidene-imidazol-5-one (MIO), which is formed autocatalytically by cyclization and dehydration of residues Ala-Ser-Gly.

It localises to the cytoplasm. It catalyses the reaction L-histidine = trans-urocanate + NH4(+). It functions in the pathway amino-acid degradation; L-histidine degradation into L-glutamate; N-formimidoyl-L-glutamate from L-histidine: step 1/3. The sequence is that of Histidine ammonia-lyase (hutH) from Rhizobium meliloti (strain 1021) (Ensifer meliloti).